The primary structure comprises 308 residues: Cytochrome b (308 aa).

A run of 4 helical transmembrane segments spans residues 1-21, 45-66, 81-101, and 146-166; these read FGSLLGICLLTQIITGLLLAM, WLIRNLHANGASFFFICIYFHI, WNIGVILLLTLMATAFVGYVL, and FFALHFLLPFVIAGLTLVHLT. Heme b contacts are provided by His51 and His65. 2 residues coordinate heme b: His150 and His164. His169 is a binding site for a ubiquinone. Helical transmembrane passes span 194–214, 256–276, and 288–308; these read TKDILGFALMFILLVSLALFS, LGGVLALAASVLVLFLLPLLH, and LSQILFWALVANLLILTWVGS.

It belongs to the cytochrome b family. The cytochrome bc1 complex contains 11 subunits: 3 respiratory subunits (MT-CYB, CYC1 and UQCRFS1), 2 core proteins (UQCRC1 and UQCRC2) and 6 low-molecular weight proteins (UQCRH/QCR6, UQCRB/QCR7, UQCRQ/QCR8, UQCR10/QCR9, UQCR11/QCR10 and a cleavage product of UQCRFS1). This cytochrome bc1 complex then forms a dimer. The cofactor is heme b.

It is found in the mitochondrion inner membrane. Functionally, component of the ubiquinol-cytochrome c reductase complex (complex III or cytochrome b-c1 complex) that is part of the mitochondrial respiratory chain. The b-c1 complex mediates electron transfer from ubiquinol to cytochrome c. Contributes to the generation of a proton gradient across the mitochondrial membrane that is then used for ATP synthesis. In Baeolophus inornatus (Oak titmouse), this protein is Cytochrome b (MT-CYB).